The following is a 315-amino-acid chain: Methionyl-tRNA formyltransferase (315 aa).

Residues serine 2 to aspartate 189 are N-terminal domain. Serine 113 to proline 116 serves as a coordination point for (6S)-5,6,7,8-tetrahydrofolate. The interval lysine 210 to alanine 315 is C-terminal domain.

This sequence belongs to the Fmt family.

The enzyme catalyses L-methionyl-tRNA(fMet) + (6R)-10-formyltetrahydrofolate = N-formyl-L-methionyl-tRNA(fMet) + (6S)-5,6,7,8-tetrahydrofolate + H(+). Functionally, attaches a formyl group to the free amino group of methionyl-tRNA(fMet). The formyl group appears to play a dual role in the initiator identity of N-formylmethionyl-tRNA by promoting its recognition by IF2 and preventing the misappropriation of this tRNA by the elongation apparatus. The sequence is that of Methionyl-tRNA formyltransferase from Salmonella typhi.